Reading from the N-terminus, the 284-residue chain is 4-hydroxy-3-methylbut-2-enyl diphosphate reductase (284 aa).

C12 is a binding site for [4Fe-4S] cluster. Residues H40 and H76 each contribute to the (2E)-4-hydroxy-3-methylbut-2-enyl diphosphate site. H40 and H76 together coordinate dimethylallyl diphosphate. Residues H40 and H76 each contribute to the isopentenyl diphosphate site. Residue C98 coordinates [4Fe-4S] cluster. A (2E)-4-hydroxy-3-methylbut-2-enyl diphosphate-binding site is contributed by H126. H126 is a binding site for dimethylallyl diphosphate. H126 is a binding site for isopentenyl diphosphate. The active-site Proton donor is E128. T161 contributes to the (2E)-4-hydroxy-3-methylbut-2-enyl diphosphate binding site. [4Fe-4S] cluster is bound at residue C191. (2E)-4-hydroxy-3-methylbut-2-enyl diphosphate-binding residues include S219, S220, N221, and S263. S219, S220, N221, and S263 together coordinate dimethylallyl diphosphate. 4 residues coordinate isopentenyl diphosphate: S219, S220, N221, and S263.

Belongs to the IspH family. [4Fe-4S] cluster serves as cofactor.

It carries out the reaction isopentenyl diphosphate + 2 oxidized [2Fe-2S]-[ferredoxin] + H2O = (2E)-4-hydroxy-3-methylbut-2-enyl diphosphate + 2 reduced [2Fe-2S]-[ferredoxin] + 2 H(+). The enzyme catalyses dimethylallyl diphosphate + 2 oxidized [2Fe-2S]-[ferredoxin] + H2O = (2E)-4-hydroxy-3-methylbut-2-enyl diphosphate + 2 reduced [2Fe-2S]-[ferredoxin] + 2 H(+). The protein operates within isoprenoid biosynthesis; dimethylallyl diphosphate biosynthesis; dimethylallyl diphosphate from (2E)-4-hydroxy-3-methylbutenyl diphosphate: step 1/1. Its pathway is isoprenoid biosynthesis; isopentenyl diphosphate biosynthesis via DXP pathway; isopentenyl diphosphate from 1-deoxy-D-xylulose 5-phosphate: step 6/6. Functionally, catalyzes the conversion of 1-hydroxy-2-methyl-2-(E)-butenyl 4-diphosphate (HMBPP) into a mixture of isopentenyl diphosphate (IPP) and dimethylallyl diphosphate (DMAPP). Acts in the terminal step of the DOXP/MEP pathway for isoprenoid precursor biosynthesis. The sequence is that of 4-hydroxy-3-methylbut-2-enyl diphosphate reductase from Petrotoga mobilis (strain DSM 10674 / SJ95).